A 375-amino-acid polypeptide reads, in one-letter code: uncharacterized protein (375 aa).

The GP-PDE domain maps to 52-301 (VLLSAHRGSW…KQGFATYHES (250 aa)).

This is an uncharacterized protein from Sinorhizobium fredii (strain NBRC 101917 / NGR234).